A 288-amino-acid polypeptide reads, in one-letter code: ATP synthase gamma chain (288 aa).

Belongs to the ATPase gamma chain family. In terms of assembly, F-type ATPases have 2 components, CF(1) - the catalytic core - and CF(0) - the membrane proton channel. CF(1) has five subunits: alpha(3), beta(3), gamma(1), delta(1), epsilon(1). CF(0) has three main subunits: a, b and c.

It is found in the cell inner membrane. Functionally, produces ATP from ADP in the presence of a proton gradient across the membrane. The gamma chain is believed to be important in regulating ATPase activity and the flow of protons through the CF(0) complex. This chain is ATP synthase gamma chain, found in Rickettsia typhi (strain ATCC VR-144 / Wilmington).